Here is a 479-residue protein sequence, read N- to C-terminus: Acetylcholine receptor subunit alpha-type acr-15 (479 aa).

The signal sequence occupies residues 1 to 18; sequence MLLPILLHFLLLITQLNG. Topologically, residues 19-230 are extracellular; that stretch reads SPAEVRLIND…HLRRRTLYYS (212 aa). 2 N-linked (GlcNAc...) asparagine glycosylation sites follow: asparagine 60 and asparagine 92. Cysteine 146 and cysteine 160 are oxidised to a cystine. Residue asparagine 200 is glycosylated (N-linked (GlcNAc...) asparagine). Cysteine 208 and cysteine 209 are joined by a disulfide. A helical transmembrane segment spans residues 231-251; sequence FNLIAPVLLTMILVILGFTVS. Residues 252–257 lie on the Cytoplasmic side of the membrane; sequence PETCEK. Residues 258–278 traverse the membrane as a helical segment; the sequence is VGLQISVSLAICIFLTIMSEL. Residues 279 to 285 are Extracellular-facing; it reads TPQTSEA. The chain crosses the membrane as a helical span at residues 286–306; sequence VPLLGVFFHTCNFISVLATSF. Over 307–453 the chain is Cytoplasmic; sequence TVYVQSFHFR…WRFAAIVVDR (147 aa). The chain crosses the membrane as a helical span at residues 454–474; sequence LCLLAFSLLIVVVSIIIALRA. Residues 475-479 lie on the Extracellular side of the membrane; it reads PYLFA.

It belongs to the ligand-gated ion channel (TC 1.A.9) family. Acetylcholine receptor (TC 1.A.9.1) subfamily. In terms of tissue distribution, expressed in interneurons, motor neurons, pharyngeal neurons and muscles.

The protein localises to the cell membrane. The protein resides in the postsynaptic cell membrane. Its function is as follows. After binding acetylcholine, the AChR responds by an extensive change in conformation that affects all subunits and leads to opening of an ion-conducting channel across the plasma membrane. Activity is required in glutamatergic neurons to mediate nicotine-induced and nicotine-motivated behaviors. In Caenorhabditis elegans, this protein is Acetylcholine receptor subunit alpha-type acr-15.